The primary structure comprises 664 residues: Methionine--tRNA ligase (664 aa).

The 'HIGH' region motif lies at tyrosine 15–histidine 25. Positions lysine 311–serine 315 match the 'KMSKS' region motif. Residue lysine 314 participates in ATP binding. The tract at residues methionine 536 to arginine 556 is disordered. In terms of domain architecture, tRNA-binding spans leucine 570–arginine 662.

It belongs to the class-I aminoacyl-tRNA synthetase family. MetG type 2B subfamily. In terms of assembly, homodimer.

The protein localises to the cytoplasm. The enzyme catalyses tRNA(Met) + L-methionine + ATP = L-methionyl-tRNA(Met) + AMP + diphosphate. Its function is as follows. Is required not only for elongation of protein synthesis but also for the initiation of all mRNA translation through initiator tRNA(fMet) aminoacylation. The protein is Methionine--tRNA ligase (metG) of Bacillus subtilis (strain 168).